Reading from the N-terminus, the 388-residue chain is MKSLSLLALAAIAPPAAVAAVVDHQVPFENRPVQGLPEKFLIQLGPEQTRWVTEDEKWALKMEGVNFFDITAEPDRGFSVKSHERIQVSFPSEVKHQTELAPLLEQLSKDNMRQNLVHFTSFHTRYYKSETGVQSATWLFEQVEEAIQDSGAAQHAVKVERFEHSWGQFSIIATIPGRTNKTVVIGAHQDSINLFLPSILPAPGADDDGSGTVTILEAFRVLLQSEAVQQGNAANTIEFHWYSAEEAGLLGSQAIFSDYSKTGRDIKAMLQQDMTGYVEGTTKAGEVESVGVITDFVDPGLTEFIKRVITGYCTIPFVLTQCGYACSDHASASRYGYPSAFVIESEFKRSNQRIHTTGDTVDLLSFDHMLQHARMTLAFAYELAFAEL.

Positions 1–19 are cleaved as a signal peptide; it reads MKSLSLLALAAIAPPAAVA. A propeptide spanning residues 20 to 88 is cleaved from the precursor; it reads AVVDHQVPFE…SVKSHERIQV (69 aa). N180 is a glycosylation site (N-linked (GlcNAc...) asparagine). Zn(2+) is bound by residues H188, D207, E246, and D273. A disulfide bridge connects residues C322 and C326. H355 lines the Zn(2+) pocket.

It belongs to the peptidase M28 family. M28E subfamily. In terms of assembly, monomer. Zn(2+) serves as cofactor.

Its subcellular location is the secreted. In terms of biological role, extracellular aminopeptidase that allows assimilation of proteinaceous substrates. The polypeptide is Leucine aminopeptidase 1 (LAP1) (Coccidioides posadasii (strain RMSCC 757 / Silveira) (Valley fever fungus)).